The chain runs to 199 residues: Imidazoleglycerol-phosphate dehydratase (199 aa).

This sequence belongs to the imidazoleglycerol-phosphate dehydratase family.

It localises to the cytoplasm. It carries out the reaction D-erythro-1-(imidazol-4-yl)glycerol 3-phosphate = 3-(imidazol-4-yl)-2-oxopropyl phosphate + H2O. The protein operates within amino-acid biosynthesis; L-histidine biosynthesis; L-histidine from 5-phospho-alpha-D-ribose 1-diphosphate: step 6/9. This is Imidazoleglycerol-phosphate dehydratase from Paramagnetospirillum magneticum (strain ATCC 700264 / AMB-1) (Magnetospirillum magneticum).